Here is a 1893-residue protein sequence, read N- to C-terminus: MGPGCDLLLRTAATITAAAIMSDTDSDEDSAGGGPFSLAGFLFGNINGAGQLEGESVLDDECKKHLAGLGALGLGSLITELTANEELTGTDGALVNDEGWVRSTEDAVDYSDINEVAEDESRRYQQTMGSLQPLCHSDYDEDDYDADCEDIDCKLMPPPPPPPGPMKKDKDQDSITGVSENGEGIILPSIIAPSSLASEKVDFSSSSDSESEMGPQEATQAESEDGKLTLPLAGIMQHDATKLLPSVTELFPEFRPGKVLRFLRLFGPGKNVPSVWRSARRKRKKKHRELIQEEQIQEVECSVESEVSQKSLWNYDYAPPPPPEQCLSDDEITMMAPVESKFSQSTGDIDKVTDTKPRVAEWRYGPARLWYDMLGVPEDGSGFDYGFKLRKTEHEPVIKSRMIEEFRKLEENNGTDLLADENFLMVTQLHWEDDIIWDGEDVKHKGTKPQRASLAGWLPSSMTRNAMAYNVQQGFAATLDDDKPWYSIFPIDNEDLVYGRWEDNIIWDAQAMPRLLEPPVLTLDPNDENLILEIPDEKEEATSNSPSKESKKESSLKKSRILLGKTGVIKEEPQQNMSQPEVKDPWNLSNDEYYYPKQQGLRGTFGGNIIQHSIPAVELRQPFFPTHMGPIKLRQFHRPPLKKYSFGALSQPGPHSVQPLLKHIKKKAKMREQERQASGGGEMFFMRTPQDLTGKDGDLILAEYSEENGPLMMQVGMATKIKNYYKRKPGKDPGAPDCKYGETVYCHTSPFLGSLHPGQLLQAFENNLFRAPIYLHKMPETDFLIIRTRQGYYIRELVDIFVVGQQCPLFEVPGPNSKRANTHIRDFLQVFIYRLFWKSKDRPRRIRMEDIKKAFPSHSESSIRKRLKLCADFKRTGMDSNWWVLKSDFRLPTEEEIRAMVSPEQCCAYYSMIAAEQRLKDAGYGEKSFFAPEEENEEDFQMKIDDEVRTAPWNTTRAFIAAMKGKCLLEVTGVADPTGCGEGFSYVKIPNKPTQQKDDKEPQPVKKTVTGTDADLRRLSLKNAKQLLRKFGVPEEEIKKLSRWEVIDVVRTMSTEQARSGEGPMSKFARGSRFSVAEHQERYKEECQRIFDLQNKVLSSTEVLSTDTDSSSAEDSDFEEMGKNIENMLQNKKTSSQLSREREEQERKELQRMLLAAGSAASGNNHRDDDTASVTSLNSSATGRCLKIYRTFRDEEGKEYVRCETVRKPAVIDAYVRIRTTKDEEFIRKFALFDEQHREEMRKERRRIQEQLRRLKRNQEKEKLKGPPEKKPKKMKERPDLKLKCGACGAIGHMRTNKFCPLYYQTNAPPSNPVAMTEEQEEELEKTVIHNDNEELIKVEGTKIVLGKQLIESADEVRRKSLVLKFPKQQLPPKKKRRVGTTVHCDYLNRPHKSIHRRRTDPMVTLSSILESIINDMRDLPNTYPFHTPVNAKVVKDYYKIITRPMDLQTLRENVRKRLYPSREEFREHLELIVKNSATYNGPKHSLTQISQSMLDLCDEKLKEKEDKLARLEKAINPLLDDDDQVAFSFILDNIVTQKMMAVPDSWPFHHPVNKKFVPDYYKVIVNPMDLETIRKNISKHKYQSRESFLDDVNLILANSVKYNGPESQYTKTAQEIVNVCYQTLTEYDEHLTQLEKDICTAKEAALEEAELESLDPMTPGPYTPQPPDLYDTNTSLSMSRDASVFQDESNMSVLDIPSATPEKQVTQEGEDGDGDLADEEEGTVQQPQASVLYEDLLMSEGEDDEEDAGSDEEGDNPFSAIQLSESGSDSDVGSGGIRPKQPRMLQENTRMDMENEESMMSYEGDGGEASHGLEDSNISYGSYEEPDPKSNTQDTSFSSIGGYEVSEEEEDEEEEEQRSGPSVLSQVHLSEDEEDSEDFHSIAGDSDLDSDE.

Residues 1 to 435 (MGPGCDLLLR…VTQLHWEDDI (435 aa)) form the Protein kinase 1 domain. At S137 the chain carries Phosphoserine; by autocatalysis. Disordered regions lie at residues 155–184 (LMPP…NGEG) and 197–224 (ASEK…AESE). The span at 156–165 (MPPPPPPPGP) shows a compositional bias: pro residues. Residues 197 to 208 (ASEKVDFSSSSD) show a composition bias toward low complexity. Phosphoserine; by autocatalysis is present on S328. A disordered region spans residues 534-557 (IPDEKEEATSNSPSKESKKESSLK). The interval 538–997 (KEEATSNSPS…KIPNKPTQQK (460 aa)) is histone acetyltransferase (HAT). K565 carries the post-translational modification N6-acetyllysine. Glycyl lysine isopeptide (Lys-Gly) (interchain with G-Cter in SUMO2) cross-links involve residues K570 and K583. 4 disordered regions span residues 990 to 1009 (PNKP…KKTV), 1128 to 1148 (MLQN…QERK), 1158 to 1177 (GSAA…VTSL), and 1254 to 1278 (RLKR…MKER). Basic and acidic residues-rich tracts occupy residues 995–1004 (QQKDDKEPQP) and 1139–1148 (SREREEQERK). Positions 1216–1294 (VRIRTTKDEE…CGACGAIGHM (79 aa)) form a DNA-binding region, HMG box; involved in promoter binding. Over residues 1254-1270 (RLKRNQEKEKLKGPPEK) the composition is skewed to basic and acidic residues. Residues 1363–1650 (VLKFPKQQLP…TAKEAALEEA (288 aa)) are interaction with ASF1A and ASF1B. Positions 1372-1379 (PPKKKRRV) match the Nuclear localization signal motif. Bromo domains lie at 1397–1505 (RRRT…LKEK) and 1519–1628 (LLDD…LTEY). Residues 1446–1893 (MDLQTLRENV…AGDSDLDSDE (448 aa)) form the Protein kinase 2 domain. Residues 1651 to 1676 (ELESLDPMTPGPYTPQPPDLYDTNTS) are disordered. Positions 1659–1668 (TPGPYTPQPP) are enriched in pro residues. 5 positions are modified to phosphoserine: S1690, S1693, A1718, E1721, and G1723. Positions 1696–1893 (DIPSATPEKQ…AGDSDLDSDE (198 aa)) are disordered. 2 stretches are compositionally biased toward acidic residues: residues 1709 to 1723 (EGED…EEEG) and 1741 to 1756 (EGED…EEGD). S1799, S1802, and S1820 each carry phosphoserine. Over residues 1830 to 1840 (KSNTQDTSFSS) the composition is skewed to polar residues. The span at 1846–1857 (VSEEEEDEEEEE) shows a compositional bias: acidic residues. The residue at position 1847 (S1847) is a Phosphoserine. Positions 1860-1869 (SGPSVLSQVH) are enriched in polar residues.

It belongs to the TAF1 family. In terms of assembly, component of the TFIID basal transcription factor complex, composed of TATA-box-binding protein TBP, and a number of TBP-associated factors (TAFs), including TAF1, TAF2, TAF3, TAF4, TAF5, TAF6, TAF7, TAF8, TAF9, TAF10, TAF11, TAF12 and TAF13. Interacts with TAF7; the interaction is direct. TAF1, when part of the TFIID complex, interacts with C-terminus of TP53. Part of a TFIID-containing RNA polymerase II pre-initiation complex that is composed of TBP and at least GTF2A1, GTF2A2, GTF2E1, GTF2E2, GTF2F1, GTF2H2, GTF2H3, GTF2H4, GTF2H5, GTF2B, TCEA1, ERCC2, ERCC3, TAF1, TAF2, TAF3, TAF4, TAF5, TAF6, TAF7, TAF8, TAF9, TAF10, TAF11, TAF12 and TAF13. Component of some MLL1/MLL complex, at least composed of the core components KMT2A/MLL1, ASH2L, HCFC1/HCF1, WDR5 and RBBP5, as well as the facultative components BACC1, CHD8, E2F6, HSP70, INO80C, KANSL1, LAS1L, MAX, MCRS1, MGA, KAT8/MOF, PELP1, PHF20, PRP31, RING2, RUVB1/TIP49A, RUVB2/TIP49B, SENP3, TAF1, TAF4, TAF6, TAF7, TAF9 and TEX10. RB1 interacts with the N-terminal domain of TAF1. Interacts with ASF1A and ASF1B. Interacts (via bromo domains) with acetylated lysine residues on the N-terminus of histone H1.4, H2A, H2B, H3 and H4 (in vitro). (Microbial infection) Interacts with SV40 Large T antigen. As to quaternary structure, (Microbial infection) Interacts with herpes simplex virus 1 ICP4. Requires Mg(2+) as cofactor. Phosphorylated by casein kinase II in vitro.

Its subcellular location is the nucleus. The enzyme catalyses L-seryl-[protein] + ATP = O-phospho-L-seryl-[protein] + ADP + H(+). It carries out the reaction L-threonyl-[protein] + ATP = O-phospho-L-threonyl-[protein] + ADP + H(+). It catalyses the reaction L-lysyl-[protein] + acetyl-CoA = N(6)-acetyl-L-lysyl-[protein] + CoA + H(+). With respect to regulation, autophosphorylates on Ser residues. Inhibited by retinoblastoma tumor suppressor protein, RB1. Binding to TAF7 or CIITA inhibits the histone acetyltransferase activity. Functionally, the TFIID basal transcription factor complex plays a major role in the initiation of RNA polymerase II (Pol II)-dependent transcription. TFIID recognizes and binds promoters with or without a TATA box via its subunit TBP, a TATA-box-binding protein, and promotes assembly of the pre-initiation complex (PIC). The TFIID complex consists of TBP and TBP-associated factors (TAFs), including TAF1, TAF2, TAF3, TAF4, TAF5, TAF6, TAF7, TAF8, TAF9, TAF10, TAF11, TAF12 and TAF13. TAF1 is the largest component and core scaffold of the TFIID complex, involved in nucleating complex assembly. TAF1 forms a promoter DNA binding subcomplex of TFIID, together with TAF7 and TAF2. Contains novel N- and C-terminal Ser/Thr kinase domains which can autophosphorylate or transphosphorylate other transcription factors. Phosphorylates TP53 on 'Thr-55' which leads to MDM2-mediated degradation of TP53. Phosphorylates GTF2A1 and GTF2F1 on Ser residues. Possesses DNA-binding activity. Essential for progression of the G1 phase of the cell cycle. Exhibits histone acetyltransferase activity towards histones H3 and H4. This is Transcription initiation factor TFIID subunit 1 from Homo sapiens (Human).